The following is a 364-amino-acid chain: Probable UDP-arabinopyranose mutase 1 (364 aa).

A DXD motif motif is present at residues 110–112; it reads DDD. Residue R158 is glycosylated (N-linked (Glc...) arginine).

Belongs to the RGP family. Homopentamer or homohexamer. It depends on Mn(2+) as a cofactor. Mg(2+) serves as cofactor. In terms of processing, reversibly glycosylated by UDP-glucose, UDP-xylose and UDP-galactose.

It localises to the secreted. It is found in the cell wall. Its subcellular location is the cell junction. The protein resides in the plasmodesma. The protein localises to the golgi apparatus. The enzyme catalyses UDP-beta-L-arabinofuranose = UDP-beta-L-arabinopyranose. Probable UDP-L-arabinose mutase involved in the biosynthesis of cell wall non-cellulosic polysaccharides. Was initially shown to possess an autoglycosylating activity which is dependent on the presence of UDP-glucose and manganese. The protein is Probable UDP-arabinopyranose mutase 1 of Zea mays (Maize).